The sequence spans 368 residues: H-2 class I histocompatibility antigen, K-W28 alpha chain (368 aa).

The first 21 residues, 1–21 (MAPCMLLLLLAAALAPTQTRA), serve as a signal peptide directing secretion. An alpha-1 region spans residues 22 to 111 (GPHSLRYFHT…LLRYYNQSAG (90 aa)). At 22–305 (GPHSLRYFHT…EPPPSAVSNT (284 aa)) the chain is on the extracellular side. Residue N107 is glycosylated (N-linked (GlcNAc...) asparagine). Positions 112–203 (GSHTIQRMYG…KNGNATLLRT (92 aa)) are alpha-2. An intrachain disulfide couples C122 to C185. The N-linked (GlcNAc...) asparagine glycan is linked to N197. The alpha-3 stretch occupies residues 204 to 295 (DSPKAHVTHH…GLPKPLTLRW (92 aa)). The region spanning 206–292 (PKAHVTHHSR…YHQGLPKPLT (87 aa)) is the Ig-like C1-type domain. C224 and C280 are joined by a disulfide. The tract at residues 296–305 (EPPPSAVSNT) is connecting peptide. Residues 306–329 (VIIAVLVVLGAAIVTGAVVAFVMM) traverse the membrane as a helical segment. Topologically, residues 330–368 (RRRNTGGKGGDYALAPGSQTSDLSLPDCKVMVHDPHSLA) are cytoplasmic. Phosphoserine is present on residues S350 and S353.

This sequence belongs to the MHC class I family. As to quaternary structure, heterodimer of an alpha chain and a beta chain (beta-2-microglobulin).

Its subcellular location is the membrane. Involved in the presentation of foreign antigens to the immune system. The polypeptide is H-2 class I histocompatibility antigen, K-W28 alpha chain (H2-K1) (Mus musculus (Mouse)).